The primary structure comprises 147 residues: Small ribosomal subunit protein uS12 (147 aa).

The protein belongs to the universal ribosomal protein uS12 family. Part of the 30S ribosomal subunit.

Functionally, with S4 and S5 plays an important role in translational accuracy. Located at the interface of the 30S and 50S subunits. The chain is Small ribosomal subunit protein uS12 from Thermococcus celer.